The primary structure comprises 82 residues: Penaeidin-3e (82 aa).

The signal sequence occupies residues 1–19 (MRLVVCLVFLAPFALVCHG). Glutamine 20 carries the post-translational modification Pyrrolidone carboxylic acid. 3 disulfide bridges follow: cysteine 51–cysteine 66, cysteine 55–cysteine 73, and cysteine 67–cysteine 74. The residue at position 81 (serine 81) is a Serine amide.

It belongs to the penaeidin family.

The protein localises to the cytoplasmic granule. In terms of biological role, antibacterial and antifungal activity. Presents chitin-binding activity. The sequence is that of Penaeidin-3e from Penaeus vannamei (Whiteleg shrimp).